We begin with the raw amino-acid sequence, 340 residues long: Glutaminyl-peptide cyclotransferase (340 aa).

Positions 1 to 23 are cleaved as a signal peptide; sequence MAIGSVVFAAAGLLLLLLPPSHQ. Residue asparagine 42 is glycosylated (N-linked (GlcNAc...) asparagine). Alpha-D-mannopyranose contacts are provided by arginine 85 and glutamate 91. A disulfide bond links cysteine 113 and cysteine 136. Aspartate 131 is a Zn(2+) binding site. 2 residues coordinate alpha-D-mannopyranose: glutamine 151 and arginine 155. N-linked (GlcNAc...) asparagine glycosylation is present at asparagine 156. Catalysis depends on glutamate 170, which acts as the Proton acceptor. Zn(2+) is bound at residue glutamate 171. Aspartate 218 serves as the catalytic Proton acceptor. Histidine 297 is a Zn(2+) binding site. An alpha-D-mannopyranose-binding site is contributed by leucine 306.

This sequence belongs to the glutaminyl-peptide cyclotransferase family.

The protein resides in the secreted. It catalyses the reaction N-terminal L-glutaminyl-[peptide] = N-terminal 5-oxo-L-prolyl-[peptide] + NH4(+). With respect to regulation, inhibited by imidazoles (imidazole, benzimidazole, 1-benzylimidazole, 1-methylimidazole, P150/03, N-omega-acetylhistamine and 4-methylimidazole) and cysteamines (cysteamine, N-dimethylcysteamine and N-diethylcysteamine). Partially inhibited by PDB50 1(3,4-dimethoxyphenyl)-3-(3-imidazol-1-ylpropyl)thiourea. Functionally, acts as a glutaminyl-peptide cyclotransferase. Responsible for the biosynthesis of pyroglutamyl peptides. Might be more efficient in the conversion of tri and tetrapeptides in vitro. Might have a relative preference for substrates containing hydrophobic amino acids in vitro. The protein is Glutaminyl-peptide cyclotransferase of Drosophila melanogaster (Fruit fly).